The chain runs to 572 residues: Probable terpene synthase 11 (572 aa).

3 residues coordinate Mg(2+): Asp317, Asp321, and Glu469. Residues 317–321 carry the DDXXD motif motif; it reads DDIFD.

This sequence belongs to the terpene synthase family. The cofactor is Mg(2+).

Its function is as follows. Probable sesquiterpene synthase. The chain is Probable terpene synthase 11 (TPS11) from Ricinus communis (Castor bean).